Reading from the N-terminus, the 978-residue chain is Serine/threonine-protein kinase PLK4 (978 aa).

One can recognise a Protein kinase domain in the interval phenylalanine 13–isoleucine 266. ATP contacts are provided by residues leucine 19–valine 27 and lysine 42. Aspartate 137 functions as the Proton acceptor in the catalytic mechanism. Polar residues-rich tracts occupy residues leucine 271–histidine 282 and serine 291–threonine 304. 4 disordered regions span residues leucine 271–serine 381, isoleucine 489–leucine 578, alanine 788–serine 818, and alanine 838–proline 869. A compositionally biased stretch (basic and acidic residues) spans arginine 324–histidine 335. 2 stretches are compositionally biased toward polar residues: residues threonine 351–valine 362 and alanine 371–serine 381. 2 stretches are compositionally biased toward basic and acidic residues: residues glycine 518–aspartate 527 and glutamate 536–leucine 566. Residues serine 565–leucine 678 enclose the Cryptic POLO box 1 (CPB1) domain. The region spanning threonine 679–serine 792 is the Cryptic POLO box 2 (CPB2) domain. Positions glutamine 801–serine 818 are enriched in polar residues. A compositionally biased stretch (basic residues) spans lysine 848 to glutamine 862. Positions histidine 895 to threonine 973 constitute a POLO box domain.

Belongs to the protein kinase superfamily. Ser/Thr protein kinase family. CDC5/Polo subfamily. In terms of assembly, homodimer. Ubiquitinated; leading to its degradation by the proteasome.

Its subcellular location is the cytoplasm. It localises to the cytoskeleton. It is found in the microtubule organizing center. The protein localises to the centrosome. The protein resides in the centriole. It carries out the reaction L-seryl-[protein] + ATP = O-phospho-L-seryl-[protein] + ADP + H(+). It catalyses the reaction L-threonyl-[protein] + ATP = O-phospho-L-threonyl-[protein] + ADP + H(+). Serine/threonine-protein kinase that plays a central role in centriole duplication. Able to trigger procentriole formation on the surface of the mother centriole cylinder, leading to the recruitment of centriole biogenesis proteins. When overexpressed, it is able to induce centrosome amplification through the simultaneous generation of multiple procentrioles adjoining each parental centriole during S phase. This chain is Serine/threonine-protein kinase PLK4, found in Nematostella vectensis (Starlet sea anemone).